Reading from the N-terminus, the 575-residue chain is Alpha-(1,6)-fucosyltransferase (575 aa).

Topologically, residues 1 to 9 are cytoplasmic; sequence MRAWTGSWR. A helical; Signal-anchor for type II membrane protein transmembrane segment spans residues 10–30; the sequence is WIMLILFAWGTLLFYIGGHLV. The Lumenal segment spans residues 31–575; that stretch reads RDNDHPDHSS…KYPTYPEAEK (545 aa). Cystine bridges form between cysteine 204/cysteine 266, cysteine 212/cysteine 230, and cysteine 218/cysteine 222. A GT23 domain is found at 206 to 493; the sequence is KARKLVCNIN…PDASANFHSL (288 aa). At serine 278 the chain carries Phosphoserine. The short motif at 299–305 is the SH3-binding element; that stretch reads PRPPYLP. The important for donor substrate binding stretch occupies residues 365–366; sequence RR. Cysteine 465 and cysteine 472 form a disulfide bridge. The SH3 domain occupies 502 to 563; that stretch reads QNAHNQIAVY…PSYKVREKIE (62 aa).

It belongs to the glycosyltransferase 23 family. In terms of processing, tyrosine phosphorylated by PKDCC/VLK.

It is found in the golgi apparatus. Its subcellular location is the golgi stack membrane. It carries out the reaction N(4)-{beta-D-GlcNAc-(1-&gt;2)-alpha-D-Man-(1-&gt;3)-[beta-D-GlcNAc-(1-&gt;2)-alpha-D-Man-(1-&gt;6)]-beta-D-Man-(1-&gt;4)-beta-D-GlcNAc-(1-&gt;4)-beta-D-GlcNAc}-L-asparaginyl-[protein] + GDP-beta-L-fucose = an N(4)-{beta-D-GlcNAc-(1-&gt;2)-alpha-D-Man-(1-&gt;3)-[beta-D-GlcNAc-(1-&gt;2)-alpha-D-Man-(1-&gt;6)]-beta-D-Man-(1-&gt;4)-beta-D-GlcNAc-(1-&gt;4)-[alpha-L-Fuc-(1-&gt;6)]-beta-D-GlcNAc}-L-asparaginyl-[protein] + GDP + H(+). Its pathway is protein modification; protein glycosylation. Functionally, catalyzes the addition of fucose in alpha 1-6 linkage to the first GlcNAc residue, next to the peptide chains in N-glycans. The protein is Alpha-(1,6)-fucosyltransferase (Fut8) of Mus musculus (Mouse).